Consider the following 3284-residue polypeptide: MKKSNFFVLLLLAISAIQIDGLHYQLLDGIATFRLDNDDTTIGGVPRNSQGVVKIKLSCGLNRLSVENKVTEVSSLELIHNCIQTETRLVGLFLNSTWITLNEVNDDDEISIAVEAKYEVCYDDGIDRCDGSLWWLQVGGNEMALLGYREKCESGEINEEYARRMCKRPYRSEKSTAISDSQGVYYDGQVLKGVRAKQFSMRTSGSPTLRRMKRDAGDNTCDYTIESTSTSTTTPTTTTVTSTVTSTTTVPTSTSTVTTAMSTSTSTPSTSTTIESTSTTFTSTASTSTSSTSTTQQSSSTITSSPSSTTLSTSIPTTTTPEITSTLSSLPDNAICSYLDETTTSTTFTTTMLTSTTTEEPSTSTTTTEVTSTSSTVTTTEPTTTLTTSTASTSTTEPSTSTVTTSPSTSPVTSTVTSSSSSSTTVTTPTSTESTSTSPSSTVTTSTTAPSTSTTGPSSSSSTPSSTASSSVSSTASSTQSSTSTQQSSTTTKSETTTSSDGTNPDFYFVEKATTTFYDSTSVNLTLNSGLGIIGYQTSIECTSPTSSNYVSTTKDGACFTKSVSMPRLGGTYPASTFVGPGNYTFRATMTTDDKKVYYTYANVYIQEYSSTTIESESSTSAVASSTSSTPSTPSSTLSTSTVTEPSSTRSSDSTTTSAGSTTTLQESTTTSEESTTDSSTTTISDTSTTSSSPSSTTADSTSTLSVDQFDFILDSGLSWNETRHNEDSINIVPLPTNAITPTERSQTFECRNVSTEPFLIIKESTCLNYSNTVLNATYSSNIPIQPIETFLVGIGTYEFRINMTDLTTMQVVSHIFTLNVVADSTSTSEVTSTTSTGSSSESSAISTTSGIESTSTLEASTTDASQDSSTSTSDSGTTSDSTTIDSSNSTPSTSDSSGLSQTPSDSSSASDSMRTTTVDPDASTETPYDFVLENLTWNETVYYSENPFYITPIPNKEPGALTTAMTCQCRNDSSQPFVLLKESNCLTEFGKNGAYSASVSFNPMTSFVPATGTYEFLINVTNRASGESASHIFTMNVVLPTTTTETPPTTVSSSDDAGGKTGGTGATGGTGGTGSGGSATTLSTGDAVRSTTSGSGSGQSSTGSGAGGSGTTASGSGSGGSSGTGSDGVNSGKTTALNGDGTGSGTATTPGSHLGDGGSTSGSGSDSNGSSGVSTKSSSGSDTSGSSDSSGANGAFSATAQPSTRTTKTRSSLATVSPISAAEQAIIDAQKADVMNQLAGIMDGSASNNSLNTSSSLLNQISSLPAADLVEVAQSLLSNTLKIPGVGNMSSVDVLKTLQDNIATTNSELADEMAKVITKLANVNMTSAQSLNSVLSSLDLALKGSTVYTLGVSSTKSKDGTYAVIFGYVIASGYTLVSPRCTLSIYGSTIYLTGDTRASYKQLDGDTVTADTMLAAAIGIQGMFATNGRTVQVEQDKIDDKRSLVSGNIMATMSGVGDVQSGEYSYNDMYVTAWNVTYDNSTVGSTSQKNTSFSFNIPVSEVQYILLIESGTMIKLHSTQNIVSRGLVVTASYGGVTYTITCTNGTGKFVEVDTDNAIFSYNADSFTVVASDGSSASTVKKLIQMPIVIENVNLALFNQTTSPLVFSNAGSYSMRMVLSPQDIGIPAVSALSQTVSISTLSPTASYTKDDLQSLIKEQTLVTVSGTLFFSKASSIDVSGYSFFVDSTALYLSNSVTTLVISSPTYNIVSLALGGYGIQITAGTYTSGSQTHTVTLMEFSDTQKMRIDGGLIIRNGTNGYVIQNGQVSTEGDVSGTKIDIVPQSLMNQESQQQIETILSNTQDFLTNNGMTMTDAEINDTSNSLLSIAGSLTSALKIALDNPLSSDLAANLKYATDNYDSLYNVLPSDPDNIVYVEEMTSEEWAAYVTKMFQKNIAKNLANQLASTLDTLENTLAARAIATGNLPYDYSNSVDGTGMVIVIDDASNIVGKTQNCEEWAFKLPSPASTLNTAEITDKTLIQVGLVCYATNPRTYVDNFDMLITSGALEAHIKDENQIIIPITGTTAPIYVNGRGSEDDAVLTLMQQGDFASYQILDLHAFRTTNWNNSLQVEIIASQDYEIPNNDDTYMFSSFQSLPGPLESNHEWIFDLNTLNKTSNYFVTAGNLINNTGLFFIGIGKRNSSTNTGNSSDIVNYGQYDSMQWSFARSVPMDYQVAAVSKGCYFYQKTSDVFNSEGMYPSDGQGMQFVNCSTDHLTMFSVGAFNPTIDADFSYNYNVNEIEKNVKVMIAAVFMLVVYGCLTINAIICQRKDASRGRLRFLKDNEPHDGYMYVIAVETGYRMFATTDSTICFNLSGNEGDQIFRSFRSEEDGNWEFPFSWGTTDRFVMTTAFPLGELEYMRLWLDDAGLDHRESWYCNRIIVKDLQTQDIYYFPFNNWLGTKNGDGETERLARVEYKRRFLDESMSMHMLAQTISWFAMFTGGGNRLRDRVSRQDYSVSIIFSLVVVSMISITILKSDNSIISDSKSVSEFTFTIKDIAFGVGFGVLITFLNSLHILLCTKCRSHSEHYYYKKRKREDPEFKDNSGSWPMFMAGMARTIIVFPVLMGLIYISGAGMSLMDDLANSFYIRFLISLILWAVVFEPIKGLIWAFLILKTRKSHKIINKLEEALLRAKPAETFLRNPYGKIEKGLGTEIADVTKLRDTENRKMRDEQLFITIRDMLCFFASLYIMVMLTYYCKDRHGYWYQLEMSTILNINQKNYGDNTFMSIQHADDFWDWARESLATALLASWYDGNPAYGMRAYMNDKVSRSMGIGTIRQVRTKKSAECTMFKQFQGYINDCGEELTSKNEEKTLYMQAGWTELESENGTDASDEYTYKTSEELSTETVSGLLYSYSGGGYTISMSGTQAEIITLFNKLDSERWIDDHTRAVIIEFSAYNAQINYFSVVQLLVEIPKSGIYLPNSWVESVRLIKSEGSDGTVVKYYEMLYIFFSVLIFVKEIVFYLYGRYKVITTMKPTRNPFKIVYQLALGNFSPWNFMDLIVGALAVASVLAYTIRQRTTNRAMEDFNANNGNSYINLTEQRNWEIVFSYCLAGAVFFTSCKMIRILRFNRRIGVLAATLDNALGAIVSFGIAFLFFSMTFNSVLYAVLGNKMGGYRSLMATFQTALAGMLGKLDVTSIQPISQFAFVVIMLYMIAGSKLVLQLYVTIIMFEFEEIRNDSEKQTNDYEIIDHIKYKTKRRLGLLEPKDFAPVSIADTQKDFRLFHSAVAKVNLLHHRATRMLQTQGQYQNQTVINYTLSYDPVSAIHETGPKRFQKWRLNDVEKD.

The signal sequence occupies residues 1-21; the sequence is MKKSNFFVLLLLAISAIQIDG. Disordered regions lie at residues 226–326, 350–505, 623–702, 827–926, and 1043–1216; these read ESTS…ITST, TTML…GTNP, VASS…ADST, STSE…ASTE, and TTTE…SLAT. Composition is skewed to low complexity over residues 227-326 and 350-500; these read STST…ITST and TTML…TTSS. Residues 827–913 are compositionally biased toward low complexity; it reads STSEVTSTTS…PSDSSSASDS (87 aa). Positions 914 to 926 are enriched in polar residues; sequence MRTTTVDPDASTE. Residues 1043–1057 show a composition bias toward low complexity; it reads TTTETPPTTVSSSDD. The span at 1060-1078 shows a compositional bias: gly residues; that stretch reads GKTGGTGATGGTGGTGSGG. The span at 1079 to 1104 shows a compositional bias: low complexity; that stretch reads SATTLSTGDAVRSTTSGSGSGQSSTG. Over residues 1105–1127 the composition is skewed to gly residues; that stretch reads SGAGGSGTTASGSGSGGSSGTGS. The span at 1128–1138 shows a compositional bias: polar residues; that stretch reads DGVNSGKTTAL. A compositionally biased stretch (low complexity) spans 1163–1192; it reads GSGSDSNGSSGVSTKSSSGSDTSGSSDSSG. A compositionally biased stretch (polar residues) spans 1197–1216; sequence FSATAQPSTRTTKTRSSLAT. The GAIN-B domain occupies 2064–2227; sequence WNNSLQVEII…SVGAFNPTID (164 aa). A disulfide bond links C2181 and C2209. Residues 2181–2227 are GPS; the sequence is CYFYQKTSDVFNSEGMYPSDGQGMQFVNCSTDHLTMFSVGAFNPTID. Residues 2245 to 2265 traverse the membrane as a helical segment; it reads VMIAAVFMLVVYGCLTINAII. Positions 2288-2411 constitute a PLAT domain; that stretch reads YMYVIAVETG…GDGETERLAR (124 aa). 10 consecutive transmembrane segments (helical) span residues 2453–2473, 2496–2516, 2557–2577, 2592–2612, 2672–2692, 2945–2965, 2994–3014, 3043–3063, 3089–3109, and 3144–3164; these read DYSV…ITIL, IAFG…HILL, IIVF…MSLM, LILW…FLIL, LFIT…MVML, MLYI…YLYG, WNFM…AYTI, WEIV…CKMI, FGIA…AVLG, and FAFV…LQLY.

The protein belongs to the polycystin family. In terms of assembly, interacts (via PLAT domain) with atp-2 (via N-terminus) and with kin-10 (via C-terminus). Interacts (via C-terminus) with isoform a of stam-1/pqn-19 (via C-terminus). Autoproteolytically processed at the GPS region of the GAIN-B domain; this cleavage modulates receptor activity. In terms of tissue distribution, exclusively expressed in a subset of three categories of adult male sensory neurons: ray neurons, hook neurons and head cephalic (CEM) neurons.

The protein resides in the membrane. The protein localises to the cell projection. Its subcellular location is the cilium. In terms of biological role, required for two aspects of male mating behavior: response to hermaphrodite contact and vulva location. Acts in the same pathway as pkd-2 and atp-2 in response behavior. May be required for ciliary targeting of pkd-2. The chain is Location of vulva defective 1 (lov-1) from Caenorhabditis elegans.